A 403-amino-acid polypeptide reads, in one-letter code: G2/mitotic-specific cyclin-B3 (403 aa).

Disordered stretches follow at residues 1–86 and 102–122; these read MPVA…APPA and RKTP…PEEP. The span at 7–25 shows a compositional bias: polar residues; sequence SKAQSSKQPRASKAPSVTE. The short motif at 51-59 is the D-box element; it reads RSAFGDITN.

The protein belongs to the cyclin family. Cyclin AB subfamily. Interacts with the CDK1 and CDK2 protein kinases. In terms of processing, ubiquitinated, leading to its degradation.

The protein resides in the nucleus. In terms of biological role, cyclins are positive regulatory subunits of the cyclin-dependent kinases (CDKs), and thereby play an essential role in the control of the cell cycle, notably via their destruction during cell division. Could be involved at the G2/M (mitosis or meiosis) transition. G2/M cyclins accumulate steadily during G2 and are abruptly destroyed at mitosis. This Gallus gallus (Chicken) protein is G2/mitotic-specific cyclin-B3 (CCNB3).